The sequence spans 268 residues: uncharacterized protein (268 aa).

The stretch at 132-159 (DELDEKIIEFDTKMNEILEELLEDVEVE) forms a coiled coil.

This is an uncharacterized protein from Methanocaldococcus jannaschii (strain ATCC 43067 / DSM 2661 / JAL-1 / JCM 10045 / NBRC 100440) (Methanococcus jannaschii).